The primary structure comprises 592 residues: Aspartate--tRNA(Asp/Asn) ligase (592 aa).

L-aspartate is bound at residue E182. The tract at residues 206–209 (QIFK) is aspartate. R228 contacts L-aspartate. Residues 228-230 (RDE) and Q237 each bind ATP. H455 serves as a coordination point for L-aspartate. E489 is a binding site for ATP. R496 contributes to the L-aspartate binding site. 541 to 544 (GLDR) lines the ATP pocket.

It belongs to the class-II aminoacyl-tRNA synthetase family. Type 1 subfamily. As to quaternary structure, homodimer.

It localises to the cytoplasm. It catalyses the reaction tRNA(Asx) + L-aspartate + ATP = L-aspartyl-tRNA(Asx) + AMP + diphosphate. In terms of biological role, aspartyl-tRNA synthetase with relaxed tRNA specificity since it is able to aspartylate not only its cognate tRNA(Asp) but also tRNA(Asn). Reaction proceeds in two steps: L-aspartate is first activated by ATP to form Asp-AMP and then transferred to the acceptor end of tRNA(Asp/Asn). This chain is Aspartate--tRNA(Asp/Asn) ligase, found in Thermoanaerobacter pseudethanolicus (strain ATCC 33223 / 39E) (Clostridium thermohydrosulfuricum).